A 187-amino-acid polypeptide reads, in one-letter code: Adenine phosphoribosyltransferase (187 aa).

Belongs to the purine/pyrimidine phosphoribosyltransferase family. Homodimer.

The protein localises to the cytoplasm. It catalyses the reaction AMP + diphosphate = 5-phospho-alpha-D-ribose 1-diphosphate + adenine. It functions in the pathway purine metabolism; AMP biosynthesis via salvage pathway; AMP from adenine: step 1/1. Catalyzes a salvage reaction resulting in the formation of AMP, that is energically less costly than de novo synthesis. The polypeptide is Adenine phosphoribosyltransferase (Burkholderia pseudomallei (strain 1106a)).